Here is a 540-residue protein sequence, read N- to C-terminus: tRNA-2-methylthio-N(6)-dimethylallyladenosine synthase (540 aa).

Positions 4–120 (RSYEVRTFGC…LPVLLERARH (117 aa)) constitute an MTTase N-terminal domain. [4Fe-4S] cluster-binding residues include cysteine 13, cysteine 49, cysteine 83, cysteine 157, cysteine 161, and cysteine 164. Residues 143 to 374 (RASHHSAWVS…ALQDEISWAE (232 aa)) enclose the Radical SAM core domain. In terms of domain architecture, TRAM spans 376 to 468 (RALVGRRVEV…PHHLTADGPL (93 aa)). The segment at 480-540 (WALGRDGDGG…ADACCTPVRR (61 aa)) is disordered. Low complexity-rich tracts occupy residues 492-502 (AAAQQPADGRP) and 520-533 (GPAS…GADA).

This sequence belongs to the methylthiotransferase family. MiaB subfamily. Monomer. The cofactor is [4Fe-4S] cluster.

The protein localises to the cytoplasm. It catalyses the reaction N(6)-dimethylallyladenosine(37) in tRNA + (sulfur carrier)-SH + AH2 + 2 S-adenosyl-L-methionine = 2-methylsulfanyl-N(6)-dimethylallyladenosine(37) in tRNA + (sulfur carrier)-H + 5'-deoxyadenosine + L-methionine + A + S-adenosyl-L-homocysteine + 2 H(+). Catalyzes the methylthiolation of N6-(dimethylallyl)adenosine (i(6)A), leading to the formation of 2-methylthio-N6-(dimethylallyl)adenosine (ms(2)i(6)A) at position 37 in tRNAs that read codons beginning with uridine. The sequence is that of tRNA-2-methylthio-N(6)-dimethylallyladenosine synthase from Frankia casuarinae (strain DSM 45818 / CECT 9043 / HFP020203 / CcI3).